The chain runs to 345 residues: Glycerol-3-phosphate dehydrogenase [NAD(P)+] (345 aa).

NADPH is bound by residues S23, Y24, H44, and K118. Positions 118, 147, and 149 each coordinate sn-glycerol 3-phosphate. A151 contributes to the NADPH binding site. 5 residues coordinate sn-glycerol 3-phosphate: K203, D256, S266, R267, and N268. K203 serves as the catalytic Proton acceptor. R267 contributes to the NADPH binding site. Positions 291 and 293 each coordinate NADPH.

The protein belongs to the NAD-dependent glycerol-3-phosphate dehydrogenase family.

The protein localises to the cytoplasm. It catalyses the reaction sn-glycerol 3-phosphate + NAD(+) = dihydroxyacetone phosphate + NADH + H(+). The catalysed reaction is sn-glycerol 3-phosphate + NADP(+) = dihydroxyacetone phosphate + NADPH + H(+). It participates in membrane lipid metabolism; glycerophospholipid metabolism. Its function is as follows. Catalyzes the reduction of the glycolytic intermediate dihydroxyacetone phosphate (DHAP) to sn-glycerol 3-phosphate (G3P), the key precursor for phospholipid synthesis. The polypeptide is Glycerol-3-phosphate dehydrogenase [NAD(P)+] (Vibrio parahaemolyticus serotype O3:K6 (strain RIMD 2210633)).